Reading from the N-terminus, the 569-residue chain is MNRLATGTAMHPAMTARTVTRGSVQQAVGGTAAMTQVALTARPITNMGMPGTRAVGGQRQVLDLGYYTSELRNLITATNKEAEALSKQTIELQKREGQLQRQQESLHAIQREVDELQGELQDILYSQSRLSENATLEDLRAEATEAESAASKTRNEANIAYKARVDAEERLRKNEASAVHLRTEMEAQIESTLGLQAAERYRSLNDENITLKQKESELRKELQEAAAVAANAYSFCTILSNYTSGGSISGQPGHIAMDERISGVDTNIQKAITLHRQIRAAKRELDAYKAKIKAAESHDPEQSLKQQLRNRFRVEQMETQSLVEEIKITESGVQQRKKLLEEITPDATVTITKEQKDLLKSVIKAEAFLVEFPNKKLALQTSIKQAQAEVVNLISRLPIPQGTVSVPGEENPGAIEAQLQQKSRELDRTTDTEMRVNAELRTYGDKVSALTDSLERLRADLRDAESIENVEAEESTLKTKLTSLKAMHEEETKTLEKSKGALRLIEDQIAANENAQLLRNLLDQLSANLQKKYAVELFIVQKTIESCYDEPKKKCLQLVSEINNILMGG.

Coiled coils occupy residues 75–156 (ITAT…TRNE), 201–231 (YRSL…VAAN), and 271–298 (AITL…AESH).

Belongs to the IFT74 family.

The protein localises to the cell projection. It localises to the cilium. Its subcellular location is the flagellum. It is found in the cytoplasm. The protein resides in the cytoskeleton. The protein localises to the flagellum axoneme. It localises to the flagellum basal body. Component of the intraflagellar transport complex B (IFT-B) involved in flagellar assembly. This chain is Intraflagellar transport protein 74/72, found in Giardia intestinalis (strain ATCC 50803 / WB clone C6) (Giardia lamblia).